The sequence spans 221 residues: Tetraspanin-2 (221 aa).

The Cytoplasmic segment spans residues 1-13 (MGRFRGGLRCIKY). The chain crosses the membrane as a helical span at residues 14–34 (LLLGFNLLFWLAGSAVIAFGL). The Extracellular segment spans residues 35 to 54 (WFRFGGAIKELSSEDKSPEY). Residues 55–75 (FYVGLYVLVGAGALMMAVGFF) form a helical membrane-spanning segment. Topologically, residues 76–90 (GCCGAMRESQCVLGS) are cytoplasmic. A helical transmembrane segment spans residues 91–111 (FFTCLLVIFAAEVTTGVFAFI). The Extracellular portion of the chain corresponds to 112–188 (GKGVAIRHVQ…ETIISVKLQL (77 aa)). N-linked (GlcNAc...) asparagine glycosylation occurs at N139. Residues 189–209 (IGIVGIGIAGLTIFGMIFSMV) traverse the membrane as a helical segment. The Cytoplasmic segment spans residues 210 to 221 (LCCAIRNSRDVI).

The protein belongs to the tetraspanin (TM4SF) family.

It localises to the membrane. May play a role in signalling in oligodendrocytes in the early stages of their terminal differentiation into myelin-forming glia and may also function in stabilizing the mature sheath. This Homo sapiens (Human) protein is Tetraspanin-2 (TSPAN2).